We begin with the raw amino-acid sequence, 526 residues long: MNVLSAALTEAMTTSSADLVVFEPETRTWHRHPWGQVHLRAQNVAERIGQDGSSAVGIVGEPTVEGVAAILGALLAGSAVSILPGLVRGADPDQWADSTLNRFANIGVTTVFSHGSYLEQLRTRDSSLVIHDDAEVAHAQRSTTLELGAPLGEFAVLQGTAGSTGTPRTAQLRPDAVLANLRGLAERVGLAGSDIGCSWLPLYHDMGLTFLLSAAVGGTETWQAPTTAFASAPFSWVHWLTESRATLTAAPNMAYGLIGKYSRRLTDVDLSAMRFALNGGEPVDIDGTARFGTELSRFGFDPGALSPSYGLAESSCAVTVPVPGVGLKVDEITVTTEAGSSTQKLAVLGHAIAGMEVRLQPGDEDAGVVDREVGEVEIRGTSMMSGYRGEAPLDPGEWFPTGDLGYLTDDGLVICGRKKELITVAGRNIFPTEIERIAARVKGVREGAVVAVGTNERAVRPGLVIAAEFRGPDEAGARSEVVQRVASECGVVPADVVFLAPGSLPRTSSGKLRRLEVKRQLEESKG.

N6-acetyllysine; by Pat is present on residues Lys-260 and Lys-511.

The protein belongs to the ATP-dependent AMP-binding enzyme family. Acetylated on Lys-511 and Lys-260 by Pat. Lys-511 is the major acetylation site. Acetylation results in the inactivation of the enzyme.

It catalyses the reaction a long-chain fatty acid + holo-[ACP] + ATP = a long-chain fatty acyl-[ACP] + AMP + diphosphate. It carries out the reaction a medium-chain fatty acid + holo-[ACP] + ATP = a medium-chain fatty acyl-[ACP] + AMP + diphosphate. The enzyme catalyses hexadecanoate + holo-[ACP] + ATP = hexadecanoyl-[ACP] + AMP + diphosphate. The catalysed reaction is hexadecanoate + ATP + H(+) = hexadecanoyl-AMP + diphosphate. It catalyses the reaction hexadecanoyl-AMP + holo-[ACP] = hexadecanoyl-[ACP] + AMP + H(+). It carries out the reaction dodecanoate + holo-[ACP] + ATP = dodecanoyl-[ACP] + AMP + diphosphate. The enzyme catalyses dodecanoate + ATP + H(+) = dodecanoyl-AMP + diphosphate. The catalysed reaction is dodecanoyl-AMP + holo-[ACP] = dodecanoyl-[ACP] + AMP + H(+). It functions in the pathway siderophore biosynthesis; mycobactin biosynthesis. Its activity is regulated as follows. Reversibly inactivated by post-translational acetylation by Pat in a cAMP-dependent manner and reactivated by Sir2 deacylase. In terms of biological role, activates lipidic moieties required for mycobactin biosynthesis. Converts medium- to long-chain aliphatic fatty acids into acyl adenylate, which is further transferred on to the phosphopantetheine arm of the carrier protein MbtL. Shows a strong preference for palmitic acid (C16) and cannot use short-chain fatty acids. Proceeds via a Bi Uni Uni Bi ping-pong mechanism. During the first half-reaction (adenylation), fatty acid binds first to the free enzyme, followed by ATP and the release of pyrophosphate to form the adenylate intermediate. During the second half-reaction (ligation), holo-MbtL binds to the enzyme followed by the release of products AMP and acylated MbtL. This chain is Medium/long-chain-fatty-acid--[acyl-carrier-protein] ligase MbtM, found in Mycolicibacterium smegmatis (strain ATCC 700084 / mc(2)155) (Mycobacterium smegmatis).